Here is a 1576-residue protein sequence, read N- to C-terminus: DNA-directed RNA polymerase subunit beta' (1576 aa).

Zn(2+)-binding residues include Cys64, Cys66, Cys79, and Cys82. Positions 590, 592, and 594 each coordinate Mg(2+). Zn(2+)-binding residues include Cys928, Cys1002, Cys1009, and Cys1012.

Belongs to the RNA polymerase beta' chain family. As to quaternary structure, the RNAP catalytic core consists of 2 alpha, 1 beta, 1 beta' and 1 omega subunit. When a sigma factor is associated with the core the holoenzyme is formed, which can initiate transcription. Requires Mg(2+) as cofactor. It depends on Zn(2+) as a cofactor.

It carries out the reaction RNA(n) + a ribonucleoside 5'-triphosphate = RNA(n+1) + diphosphate. In terms of biological role, DNA-dependent RNA polymerase catalyzes the transcription of DNA into RNA using the four ribonucleoside triphosphates as substrates. In Aquifex pyrophilus, this protein is DNA-directed RNA polymerase subunit beta'.